The following is a 191-amino-acid chain: MDESGGDSGSVATPVQQRAHEAWRIYQHYLDKTTPHANYRWIGTLVVALIYCLRVYYIQGFYIIAYGLGIYLLNLLIGFLSPLVDPEAGGVSDGPSLPTRGSDEFKPFIRRLPEFKFWYSMTKAFCIAFLMTFFSVFDVPVFWPILLCYWIVLFVLTMRRQIAHMIKYKYIPFSFGKQKYGGRSSSGSRAD.

Met1 carries the N-acetylmethionine modification. Helical transmembrane passes span 39–57, 60–80, 115–135, and 136–156; these read YRWI…RVYY, GFYI…IGFL, FKFW…TFFS, and VFDV…LFVL.

Belongs to the RER1 family.

The protein resides in the membrane. Involved in the retrieval of endoplasmic reticulum membrane proteins from the early Golgi compartment. The protein is Protein RER1A (RER1A) of Arabidopsis thaliana (Mouse-ear cress).